Here is a 165-residue protein sequence, read N- to C-terminus: Glucosamine 6-phosphate N-acetyltransferase 1 (165 aa).

Positions 22–165 (YRIRPLELAD…EKNVQMGLYF (144 aa)) constitute an N-acetyltransferase domain. Substrate-binding positions include serine 44, 92–95 (KFIR), and 104–106 (EDV). 114 to 119 (GRGLGE) is an acetyl-CoA binding site. 135–136 (YK) lines the substrate pocket. 149-151 (YAK) contributes to the acetyl-CoA binding site.

The protein belongs to the acetyltransferase family. GNA1 subfamily. In terms of assembly, homodimer. Highly expressed in the root elongation zone and at lower levels in leaves and grains.

The protein resides in the endoplasmic reticulum membrane. It carries out the reaction D-glucosamine 6-phosphate + acetyl-CoA = N-acetyl-D-glucosamine 6-phosphate + CoA + H(+). Its pathway is nucleotide-sugar biosynthesis; UDP-N-acetyl-alpha-D-glucosamine biosynthesis; N-acetyl-alpha-D-glucosamine 1-phosphate from alpha-D-glucosamine 6-phosphate (route I): step 1/2. Functionally, acetyltransferase involved in de novo biosynthesis of UDP-N-acetylglucosamine (UDP-GlcNAc) in roots and is required for maintaining normal root cell shape. UDP-GlcNAc is an essential metabolite that serves as an initial sugar donor for N-glycan synthesis and thus plays an important role in protein and lipid glycosylation. This chain is Glucosamine 6-phosphate N-acetyltransferase 1 (GNA1), found in Oryza sativa subsp. japonica (Rice).